The following is a 599-amino-acid chain: Elongation factor 4 (599 aa).

The tr-type G domain maps to 2 to 185; sequence ENIRNFSIIA…AITKRIPPPK (184 aa). GTP contacts are provided by residues 14 to 19 and 132 to 135; these read DHGKST and NKID.

The protein belongs to the TRAFAC class translation factor GTPase superfamily. Classic translation factor GTPase family. LepA subfamily.

It localises to the cell inner membrane. It carries out the reaction GTP + H2O = GDP + phosphate + H(+). Functionally, required for accurate and efficient protein synthesis under certain stress conditions. May act as a fidelity factor of the translation reaction, by catalyzing a one-codon backward translocation of tRNAs on improperly translocated ribosomes. Back-translocation proceeds from a post-translocation (POST) complex to a pre-translocation (PRE) complex, thus giving elongation factor G a second chance to translocate the tRNAs correctly. Binds to ribosomes in a GTP-dependent manner. This Hydrogenobaculum sp. (strain Y04AAS1) protein is Elongation factor 4.